The following is a 401-amino-acid chain: Anhydro-N-acetylmuramic acid kinase (401 aa).

25-32 contributes to the ATP binding site; that stretch reads GTSLDGLD.

Belongs to the anhydro-N-acetylmuramic acid kinase family.

The catalysed reaction is 1,6-anhydro-N-acetyl-beta-muramate + ATP + H2O = N-acetyl-D-muramate 6-phosphate + ADP + H(+). The protein operates within amino-sugar metabolism; 1,6-anhydro-N-acetylmuramate degradation. It participates in cell wall biogenesis; peptidoglycan recycling. In terms of biological role, catalyzes the specific phosphorylation of 1,6-anhydro-N-acetylmuramic acid (anhMurNAc) with the simultaneous cleavage of the 1,6-anhydro ring, generating MurNAc-6-P. Is required for the utilization of anhMurNAc either imported from the medium or derived from its own cell wall murein, and thus plays a role in cell wall recycling. This chain is Anhydro-N-acetylmuramic acid kinase, found in Pseudoalteromonas translucida (strain TAC 125).